The chain runs to 273 residues: Replication factor A protein 2 (273 aa).

Residues 1–13 (MATYQPYNEYSSV) show a composition bias toward polar residues. The interval 1–38 (MATYQPYNEYSSVTGGGFENSESRPGSGESETNTRVNT) is disordered. Serine 27 carries the phosphoserine modification. Over residues 29–38 (ESETNTRVNT) the composition is skewed to polar residues. The OB DNA-binding region spans 69–157 (VCFVGVVRNI…NIQYAVIKPI (89 aa)). Serine 122 carries the post-translational modification Phosphoserine.

The protein belongs to the replication factor A protein 2 family. In terms of assembly, heterotrimer of 69, 36, and 13 kDa chains. The DNA-binding activity may reside exclusively on the 69 kDa subunit. Interacts with MCM10. In terms of processing, phosphorylated in a cell cycle-dependent manner with phosphorylation increasing at the entry in S phase and dephosphorylation occurring at mitosis. The N-terminus is blocked.

It is found in the nucleus. Functionally, binds to single-stranded sequences participating in DNA replication in addition to those mediating transcriptional repression (URS1) and activation (CAR1). Stimulates the activity of a cognate strand exchange protein (SEP1). It cooperates with T-AG and DNA topoisomerase I to unwind template DNA containing the simian virus 40 origin of DNA replication. This is Replication factor A protein 2 (RFA2) from Saccharomyces cerevisiae (strain ATCC 204508 / S288c) (Baker's yeast).